Here is a 389-residue protein sequence, read N- to C-terminus: Probable nitrate transporter NarT (389 aa).

12 helical membrane passes run 14–34, 45–65, 69–89, 97–117, 139–159, 161–181, 211–231, 246–266, 268–288, 294–314, 331–351, and 353–373; these read TLSL…MPFI, ISII…PFGY, IVGA…PIFF, GMLM…SVGV, GNIG…IIGW, TTVR…FIFG, WYFI…NYLV, GVFI…GDKF, AVKV…ILGI, LFTV…GLIF, IVSM…TYVA, and LTGS…IALF.

It belongs to the major facilitator superfamily. Nitrate/nitrite porter (TC 2.A.1.8) family.

The protein localises to the cell membrane. Its function is as follows. Probably required for nitrate uptake under anoxic conditions. Also possibly involved in excretion of nitrite produced by the dissimilatory reduction of nitrate. This chain is Probable nitrate transporter NarT (narT), found in Staphylococcus aureus (strain USA300).